Reading from the N-terminus, the 556-residue chain is Acetyl-coenzyme A thioesterase (556 aa).

Residues 6 to 118 (APGEVLMSQA…FSTFVVKPLG (113 aa)) form the HotDog ACOT-type 1 domain. Lys-34 carries the N6-succinyllysine modification. CoA-binding positions include 54–56 (TAS) and 83–85 (STS). An N6-succinyllysine modification is found at Lys-97. Residue Arg-145 participates in CoA binding. N6-succinyllysine occurs at positions 160 and 229. Positions 180–295 (MATSVQSIEL…FLIYNAVDDQ (116 aa)) constitute a HotDog ACOT-type 2 domain. 235–237 (KFR) contacts CoA. An START domain is found at 341–550 (GTQWDISKKG…IKFIENATHD (210 aa)).

As to quaternary structure, homodimer or homotetramer.

The protein resides in the cytoplasm. It localises to the cytosol. The enzyme catalyses acetyl-CoA + H2O = acetate + CoA + H(+). It catalyses the reaction butanoyl-CoA + H2O = butanoate + CoA + H(+). The catalysed reaction is hexanoyl-CoA + H2O = hexanoate + CoA + H(+). It functions in the pathway lipid metabolism; fatty acid metabolism. Its activity is regulated as follows. Allosterically regulated by ATP (activator) and ADP (inhibitor). Cold labile, it dissociates into inactive monomers at low temperature. Its function is as follows. Catalyzes the hydrolysis of acyl-CoAs into free fatty acids and coenzyme A (CoASH), regulating their respective intracellular levels. Preferentially hydrolyzes acetyl-CoA. This chain is Acetyl-coenzyme A thioesterase (Acot12), found in Rattus norvegicus (Rat).